Here is a 102-residue protein sequence, read N- to C-terminus: Large ribosomal subunit protein bL21 (102 aa).

Belongs to the bacterial ribosomal protein bL21 family. Part of the 50S ribosomal subunit. Contacts protein L20.

Its function is as follows. This protein binds to 23S rRNA in the presence of protein L20. The chain is Large ribosomal subunit protein bL21 from Geotalea uraniireducens (strain Rf4) (Geobacter uraniireducens).